The primary structure comprises 192 residues: Peptide deformylase (192 aa).

Fe cation contacts are provided by C102 and H145. E146 is a catalytic residue. H149 is a binding site for Fe cation.

This sequence belongs to the polypeptide deformylase family. Fe(2+) serves as cofactor.

The catalysed reaction is N-terminal N-formyl-L-methionyl-[peptide] + H2O = N-terminal L-methionyl-[peptide] + formate. In terms of biological role, removes the formyl group from the N-terminal Met of newly synthesized proteins. Requires at least a dipeptide for an efficient rate of reaction. N-terminal L-methionine is a prerequisite for activity but the enzyme has broad specificity at other positions. In Thermus thermophilus (strain ATCC BAA-163 / DSM 7039 / HB27), this protein is Peptide deformylase.